The following is a 129-amino-acid chain: Small ribosomal subunit protein uS11 (129 aa).

The protein belongs to the universal ribosomal protein uS11 family. Part of the 30S ribosomal subunit. Interacts with proteins S7 and S18. Binds to IF-3.

In terms of biological role, located on the platform of the 30S subunit, it bridges several disparate RNA helices of the 16S rRNA. Forms part of the Shine-Dalgarno cleft in the 70S ribosome. This Symbiobacterium thermophilum (strain DSM 24528 / JCM 14929 / IAM 14863 / T) protein is Small ribosomal subunit protein uS11.